We begin with the raw amino-acid sequence, 185 residues long: Ribose 1,5-bisphosphate phosphokinase PhnN (185 aa).

10-17 (GPSGSGKD) serves as a coordination point for ATP.

Belongs to the ribose 1,5-bisphosphokinase family.

The catalysed reaction is alpha-D-ribose 1,5-bisphosphate + ATP = 5-phospho-alpha-D-ribose 1-diphosphate + ADP. It functions in the pathway metabolic intermediate biosynthesis; 5-phospho-alpha-D-ribose 1-diphosphate biosynthesis; 5-phospho-alpha-D-ribose 1-diphosphate from D-ribose 5-phosphate (route II): step 3/3. In terms of biological role, catalyzes the phosphorylation of ribose 1,5-bisphosphate to 5-phospho-D-ribosyl alpha-1-diphosphate (PRPP). Accepts ATP but not GTP as a phosphoryl donor, and uses ribose 1,5-bisphosphate but not ribose, ribose 1-phosphate, or ribose 5-phosphate as a phosphoryl acceptor. This chain is Ribose 1,5-bisphosphate phosphokinase PhnN (phnN), found in Escherichia coli (strain K12).